A 513-amino-acid chain; its full sequence is 2-isopropylmalate synthase (513 aa).

The Pyruvate carboxyltransferase domain occupies 4-266 (IEFFDTSLRD…KSPLVLAETM (263 aa)). 4 residues coordinate Mn(2+): aspartate 13, histidine 201, histidine 203, and asparagine 237. The tract at residues 390–513 (ILNNVQIDGH…VEQISAHDGI (124 aa)) is regulatory domain.

It belongs to the alpha-IPM synthase/homocitrate synthase family. LeuA type 1 subfamily. As to quaternary structure, homodimer. Mn(2+) serves as cofactor.

It is found in the cytoplasm. It catalyses the reaction 3-methyl-2-oxobutanoate + acetyl-CoA + H2O = (2S)-2-isopropylmalate + CoA + H(+). It participates in amino-acid biosynthesis; L-leucine biosynthesis; L-leucine from 3-methyl-2-oxobutanoate: step 1/4. Functionally, catalyzes the condensation of the acetyl group of acetyl-CoA with 3-methyl-2-oxobutanoate (2-ketoisovalerate) to form 3-carboxy-3-hydroxy-4-methylpentanoate (2-isopropylmalate). This Lactococcus lactis subsp. cremoris (strain SK11) protein is 2-isopropylmalate synthase.